The chain runs to 1356 residues: MKVTVCFGRTRVVVPCGDGHMKVFSLIQQAVTRYRKAIAKDPNYWIQVHRLEHGDGGILDLDDILCDVADDKDRLVAVFDEQDPHHGGDGTSASSTGTQSPEIFGSELGTNNVSAFQPYQATSEIEVTPSVLRANMPLHVRRSSDPALIGLSTSVSDSNFSSEEPSRKNPTRWSTTAGFLKQNTAGSPKTCDRKKDENYRSLPRDTSNWSNQFQRDNARSSLSASHPMVGKWLEKQEQDEDGTEEDNSRVEPVGHADTGLEHIPNFSLDDMVKLVEVPNDGGPLGIHVVPFSARGGRTLGLLVKRLEKGGKAEHENLFRENDCIVRINDGDLRNRRFEQAQHMFRQAMRTPIIWFHVVPAANKEQYEQLSQSEKNNYYSSRFSPDSQYIDNRSVNSAGLHTVQRAPRLNHPPEQIDSHSRLPHSAHPSGKPPSAPASAPQNVFSTTVSSGYNTKKIGKRLNIQLKKGTEGLGFSITSRDVTIGGSAPIYVKNILPRGAAIQDGRLKAGDRLIEVNGVDLVGKSQEEVVSLLRSTKMEGTVSLLVFRQEDAFHPRELNAEPSQMQIPKETKAEDEDIVLTPDGTREFLTFEVPLNDSGSAGLGVSVKGNRSKENHADLGIFVKSIINGGAASKDGRLRVNDQLIAVNGESLLGKTNQDAMETLRRSMSTEGNKRGMIQLIVARRISKCNELKSPGSPPGPELPIETALDDRERRISHSLYSGIEGLDESPSRNAALSRIMGESGKYQLSPTVNMPQDDTVIIEDDRLPVLPPHLSDQSSSSSHDDVGFVTADAGTWAKAAISDSADCSLSPDVDPVLAFQREGFGRQSMSEKRTKQFSDASQLDFVKTRKSKSMDLGIADETKLNTVDDQKAGSPSRDVGPSLGLKKSSSLESLQTAVAEVTLNGDIPFHRPRPRIIRGRGCNESFRAAIDKSYDKPAVDDDDEGMETLEEDTEESSRSGRESVSTASDQPSHSLERQMNGNQEKGDKTDRKKDKTGKEKKKDRDKEKDKMKAKKGMLKGLGDMFRFGKHRKDDKIEKTGKIKIQESFTSEEERIRMKQEQERIQAKTREFRERQARERDYAEIQDFHRTFGCDDELMYGGVSSYEGSMALNARPQSPREGHMMDALYAQVKKPRNSKPSPVDSNRSTPSNHDRIQRLRQEFQQAKQDEDVEDRRRTYSFEQPWPNARPATQSGRHSVSVEVQMQRQRQEERESSQQAQRQYSSLPRQSRKNASSVSQDSWEQNYSPGEGFQSAKENPRYSSYQGSRNGYLGGHGFNARVMLETQELLRQEQRRKEQQMKKQPPSEGPSNYDSYKKVQDPSYAPPKGPFRQDVPPSPSQVARLNRLQTPEKGRPFYS.

Ser-25 is modified (phosphoserine). Disordered regions lie at residues 81–100 (EQDP…GTQS) and 154–262 (SVSD…GLEH). The residue at position 91 (Thr-91) is a Phosphothreonine. Low complexity predominate over residues 91–100 (TSASSTGTQS). Composition is skewed to polar residues over residues 154 to 163 (SVSDSNFSSE) and 171 to 187 (TRWS…TAGS). 2 positions are modified to phosphoserine: Ser-156 and Ser-174. Residues 190–203 (TCDRKKDENYRSLP) show a composition bias toward basic and acidic residues. Polar residues predominate over residues 204–224 (RDTSNWSNQFQRDNARSSLSA). The segment covering 246 to 260 (DNSRVEPVGHADTGL) has biased composition (basic and acidic residues). The PDZ 1 domain occupies 271-359 (MVKLVEVPND…TPIIWFHVVP (89 aa)). Ser-383 carries the phosphoserine modification. The disordered stretch occupies residues 408-448 (LNHPPEQIDSHSRLPHSAHPSGKPPSAPASAPQNVFSTTVS). PDZ domains are found at residues 461 to 546 (NIQL…LVFR) and 590 to 677 (EVPL…GMIQ). Residue Tyr-489 is modified to Phosphotyrosine. Residues Ser-692, Ser-695, Ser-715, Ser-728, Ala-792, Ser-809, and Ser-827 each carry the phosphoserine modification. The interaction with PRKCI and PRKCZ stretch occupies residues 712 to 936 (RRISHSLYSG…AAIDKSYDKP (225 aa)). Position 834 is an N6-acetyllysine (Lys-834). At Ser-837 the chain carries Phosphoserine. The residue at position 851 (Lys-851) is an N6-acetyllysine. Phosphoserine occurs at positions 852 and 873. 2 disordered regions span residues 865–886 (TVDD…GLKK) and 932–1025 (SYDK…DMFR). An N6-acetyllysine modification is found at Lys-885. Positions 935-1356 (KPAVDDDDEG…TPEKGRPFYS (422 aa)) are interaction with FRMD4A. The segment covering 939 to 953 (DDDDEGMETLEEDTE) has biased composition (acidic residues). Position 962 is a phosphoserine; by AURKA (Ser-962). Over residues 968 to 982 (DQPSHSLERQMNGNQ) the composition is skewed to polar residues. Residues Ser-971 and Ser-973 each carry the phosphoserine modification. Over residues 983 to 1009 (EKGDKTDRKKDKTGKEKKKDRDKEKDK) the composition is skewed to basic and acidic residues. Ser-1046 bears the Phosphoserine mark. Positions 1049–1077 (SEEERIRMKQEQERIQAKTREFRERQARE) form a coiled coil. Residues 1129-1356 (QVKKPRNSKP…TPEKGRPFYS (228 aa)) are disordered. Residues 1136-1149 (SKPSPVDSNRSTPS) are compositionally biased toward polar residues. The segment covering 1150 to 1177 (NHDRIQRLRQEFQQAKQDEDVEDRRRTY) has biased composition (basic and acidic residues). Coiled-coil stretches lie at residues 1151 to 1174 (HDRI…EDRR), 1201 to 1224 (VQMQ…YSSL), and 1280 to 1301 (MLET…MKKQ). A compositionally biased stretch (low complexity) spans 1196-1205 (SVSVEVQMQR). A compositionally biased stretch (polar residues) spans 1221-1245 (YSSLPRQSRKNASSVSQDSWEQNYS). The segment covering 1285–1298 (ELLRQEQRRKEQQM) has biased composition (basic and acidic residues). Residues 1337 to 1346 (SQVARLNRLQ) are compositionally biased toward polar residues. The span at 1347-1356 (TPEKGRPFYS) shows a compositional bias: basic and acidic residues. Position 1350 is an N6-acetyllysine (Lys-1350).

It belongs to the PAR3 family. As to quaternary structure, interacts (via PDZ 1 domain) with F11R/JAM1, PARD6A and PARD6B. Interacts with PRCKI and CDH5. Interacts (via PDZ 3 domain) with PTEN (via C-terminus). Part of a complex with PARD6A or PARD6B, PRKCI or PRKCZ and CDC42 or RAC1. Component of a complex whose core is composed of ARHGAP17, AMOT, PALS1, PATJ and PARD3/PAR3. Interacts with LIMK2, AURKA and AURKB. Component of the Par polarity complex, composed of at least phosphorylated PRKCZ, PARD3 and TIAM1. Directly interacts with TIAM1 and TIAM2. Interacts with ECT2, FBF1 and SIRT2. Interacts (via coiled-coil domain) with FRMD4A. Found in a complex with PARD3, CYTH1 and FRMD4A. Interacts with SAPCD2. Interacts with PRKCA. In terms of assembly, interacts with PRKCZ. Post-translationally, acetylated. Deacetylated by SIRT2, thereby inhibiting Schwann cell peripheral myelination. In terms of processing, phosphorylation at Ser-827 by PRKCZ and PRKCI occurs at the most apical tip of epithelial cell-cell contacts during the initial phase of tight junction formation and may promote dissociation of the complex with PARD6. EGF-induced Tyr-1127 phosphorylation mediates dissociation from LIMK2. Phosphorylation by AURKA at Ser-962 is required for the normal establishment of neuronal polarity. Widely expressed.

It localises to the cytoplasm. It is found in the endomembrane system. Its subcellular location is the cell junction. The protein resides in the tight junction. The protein localises to the adherens junction. It localises to the cell membrane. It is found in the cell cortex. Its subcellular location is the cytoskeleton. In terms of biological role, adapter protein involved in asymmetrical cell division and cell polarization processes. Seems to play a central role in the formation of epithelial tight junctions. Targets the phosphatase PTEN to cell junctions. Involved in Schwann cell peripheral myelination. Association with PARD6B may prevent the interaction of PARD3 with F11R/JAM1, thereby preventing tight junction assembly. The PARD6-PARD3 complex links GTP-bound Rho small GTPases to atypical protein kinase C proteins. Required for establishment of neuronal polarity and normal axon formation in cultured hippocampal neurons. The sequence is that of Partitioning defective 3 homolog from Homo sapiens (Human).